The primary structure comprises 302 residues: uncharacterized protein (302 aa).

The HTH lysR-type domain occupies 1 to 60 (MRMNMSDFATFFAVARNQSFRAAGDELGLSSSAISHSIKTLEQRLKIRLFNRTTRSVSLT). Positions 20–40 (FRAAGDELGLSSSAISHSIKT) form a DNA-binding region, H-T-H motif.

Belongs to the LysR transcriptional regulatory family.

This is an uncharacterized protein from Escherichia coli (strain K12).